The following is a 25-amino-acid chain: Phospholipase A1 verutoxin-2a (25 aa).

The protein belongs to the AB hydrolase superfamily. Lipase family. Post-translationally, contains six disulfide bonds. As to expression, expressed by the venom gland.

The protein localises to the secreted. It carries out the reaction a 1,2-diacyl-sn-glycero-3-phosphocholine + H2O = a 2-acyl-sn-glycero-3-phosphocholine + a fatty acid + H(+). The enzyme catalyses 1-(9Z-octadecenoyl)-2-hexadecanoyl-sn-glycero-3-phosphocholine + H2O = 2-hexadecanoyl-sn-glycero-3-phosphocholine + (9Z)-octadecenoate + H(+). The catalysed reaction is a 1-acyl-sn-glycero-3-phosphocholine + H2O = sn-glycerol 3-phosphocholine + a fatty acid + H(+). Its pathway is phospholipid metabolism. Its activity is regulated as follows. Activity is maximal in the presence of calcium. However, unlike phospholipases A2 whose catalytic activity is strictly calcium-dependent, this enzyme shows considerable catalytic activity on phosphatidylcholine emulsified in calcium free solution; the catalytic activity of VT-2a assayed in the absence of calcium ions is 18-20% of that assayed in solution containing calcium ions. Functionally, catalyzes the hydrolysis of glycerophospholipids such as phosphatidylcholine (1,2-diacyl-sn-glycero-3-phosphocholine) and has a moderate activity to hydrolyze lysoglycerophospholipids such as lysophosphatidylcholine (1-acyl-sn-glycero-3-phosphocholine), but is unable to hydrolyze sphingomyelin. In addition to acting as an allergen, it possesses a potent hemolytic activity on red blood cells of mice (98.8% of hemolysis at 3.0 ug/ml). The polypeptide is Phospholipase A1 verutoxin-2a (Vespa velutina (Asian yellow-legged hornet)).